The following is a 444-amino-acid chain: Multidrug resistance protein MdtA (444 aa).

Positions 1-20 are cleaved as a signal peptide; sequence MKSQSKRTSRLFVFVGVVVA. Positions 37–52 are enriched in polar residues; the sequence is NNTSGAQQSARGQDTS. 2 disordered regions span residues 37 to 60 and 399 to 444; these read NNTS…RNTP and PRSA…AEKS. Low complexity predominate over residues 409-419; the sequence is ASAEKAAAEAE. A compositionally biased stretch (polar residues) spans 435–444; the sequence is ARSTTAAEKS.

Belongs to the membrane fusion protein (MFP) (TC 8.A.1) family. Part of a tripartite efflux system composed of MdtA, MdtB and MdtC.

Its subcellular location is the cell inner membrane. In Yersinia pseudotuberculosis serotype I (strain IP32953), this protein is Multidrug resistance protein MdtA.